Reading from the N-terminus, the 318-residue chain is Ferredoxin--NADP reductase (318 aa).

Asp33, Gln41, Tyr46, Val84, Phe115, Asp276, and Thr316 together coordinate FAD.

This sequence belongs to the ferredoxin--NADP reductase type 2 family. Homodimer. The cofactor is FAD.

It catalyses the reaction 2 reduced [2Fe-2S]-[ferredoxin] + NADP(+) + H(+) = 2 oxidized [2Fe-2S]-[ferredoxin] + NADPH. The protein is Ferredoxin--NADP reductase of Lactobacillus gasseri (strain ATCC 33323 / DSM 20243 / BCRC 14619 / CIP 102991 / JCM 1131 / KCTC 3163 / NCIMB 11718 / NCTC 13722 / AM63).